A 274-amino-acid polypeptide reads, in one-letter code: Large ribosomal subunit protein uL2 (274 aa).

Disordered stretches follow at residues 28 to 54 (APHA…TRHI) and 224 to 274 (VAMN…RRRK). A compositionally biased stretch (basic and acidic residues) spans 263–274 (KRTDKMIVRRRK).

The protein belongs to the universal ribosomal protein uL2 family. In terms of assembly, part of the 50S ribosomal subunit. Forms a bridge to the 30S subunit in the 70S ribosome.

One of the primary rRNA binding proteins. Required for association of the 30S and 50S subunits to form the 70S ribosome, for tRNA binding and peptide bond formation. It has been suggested to have peptidyltransferase activity; this is somewhat controversial. Makes several contacts with the 16S rRNA in the 70S ribosome. This chain is Large ribosomal subunit protein uL2, found in Pseudomonas syringae pv. tomato (strain ATCC BAA-871 / DC3000).